A 228-amino-acid polypeptide reads, in one-letter code: Protein-L-isoaspartate O-methyltransferase (228 aa).

Residues 1 to 20 form a disordered region; that stretch reads MVAVSLKMSQPAAPPPPMGE. S76 is a catalytic residue.

This sequence belongs to the methyltransferase superfamily. L-isoaspartyl/D-aspartyl protein methyltransferase family.

It is found in the cytoplasm. It catalyses the reaction [protein]-L-isoaspartate + S-adenosyl-L-methionine = [protein]-L-isoaspartate alpha-methyl ester + S-adenosyl-L-homocysteine. In terms of biological role, catalyzes the methyl esterification of L-isoaspartyl residues in peptides and proteins that result from spontaneous decomposition of normal L-aspartyl and L-asparaginyl residues. It plays a role in the repair and/or degradation of damaged proteins. This chain is Protein-L-isoaspartate O-methyltransferase, found in Magnetococcus marinus (strain ATCC BAA-1437 / JCM 17883 / MC-1).